A 274-amino-acid chain; its full sequence is Histone H1.1 (274 aa).

Disordered regions lie at residues 1 to 63 (MSEV…SSHP) and 129 to 155 (PSAS…PATV). An N-acetylserine modification is found at Ser2. Residues 16–25 (TAADAPVTDA) are compositionally biased toward low complexity. The segment covering 40 to 49 (NVKEVKEKKT) has biased composition (basic and acidic residues). The H15 domain occupies 61-130 (SHPTYEEMIK…KVKASFKLPS (70 aa)). The span at 129-145 (PSASAKASSPKAAAEKS) shows a compositional bias: low complexity. Lys161 participates in a covalent cross-link: Glycyl lysine isopeptide (Lys-Gly) (interchain with G-Cter in ubiquitin). Disordered regions lie at residues 167-233 (ASKA…PAKK) and 249-274 (KTPV…RVKK). Composition is skewed to low complexity over residues 175 to 185 (AVKPKTAAAKK) and 221 to 233 (AAKT…PAKK).

It belongs to the histone H1/H5 family.

Its subcellular location is the nucleus. The protein localises to the chromosome. Histones H1 are necessary for the condensation of nucleosome chains into higher-order structures. The polypeptide is Histone H1.1 (Arabidopsis thaliana (Mouse-ear cress)).